A 765-amino-acid chain; its full sequence is Membrane metallo-endopeptidase-like 1 (765 aa).

At 1 to 19 (MVERAGWCRKKSPGFVEYG) the chain is on the cytoplasmic side. The helical; Signal-anchor for type II membrane protein transmembrane segment at 20-40 (LMVLLLLLLGAIVTLGVFYSI) threads the bilayer. Residues 41-765 (GKQLPLLTSL…MHPMKRCRIW (725 aa)) lie on the Lumenal side of the membrane. In terms of domain architecture, Peptidase M13 spans 74 to 765 (ICTTPSCVIA…MHPMKRCRIW (692 aa)). Intrachain disulfides connect cysteine 75-cysteine 80, cysteine 98-cysteine 750, cysteine 106-cysteine 710, cysteine 161-cysteine 425, and cysteine 636-cysteine 762. An a peptide-binding site is contributed by arginine 121. 4 N-linked (GlcNAc...) asparagine glycosylation sites follow: asparagine 163, asparagine 279, asparagine 303, and asparagine 336. Residues 523-549 (FENGLQNLKNNAQRSLKKLREKVDQNL) adopt a coiled-coil conformation. Histidine 599 contacts Zn(2+). Residue glutamate 600 is part of the active site. Residues histidine 603 and glutamate 662 each contribute to the Zn(2+) site. Aspartate 666 acts as the Proton donor in catalysis. N-linked (GlcNAc...) asparagine glycosylation is present at asparagine 694.

The protein belongs to the peptidase M13 family. Zn(2+) is required as a cofactor. N-glycosylated. In terms of tissue distribution, highly expressed in testis. Also expressed in ovary. Weakly or not expressed in brain, lung, heart, liver, kidney, adrenal gland and intestine.

The protein localises to the membrane. The protein resides in the secreted. It carries out the reaction Preferential cleavage of polypeptides between hydrophobic residues, particularly with Phe or Tyr at P1'.. Inhibited by thiorphan and phosphoramidon. Its function is as follows. Metalloprotease involved in sperm function, possibly by modulating the processes of fertilization and early embryonic development. Degrades a broad variety of small peptides with a preference for peptides shorter than 3 kDa containing neutral bulky aliphatic or aromatic amino acid residues. Shares the same substrate specificity with MME and cleaves peptides at the same amide bond. This chain is Membrane metallo-endopeptidase-like 1 (Mmel1), found in Mus musculus (Mouse).